Consider the following 449-residue polypeptide: Tubulin alpha-1C chain (449 aa).

The short motif at 1–4 is the MREC motif element; that stretch reads MREC. Q11 lines the GTP pocket. K40 carries the post-translational modification N6-acetyllysine. GTP is bound by residues E71, S140, G144, T145, T179, N206, and N228. E71 lines the Mg(2+) pocket. E254 is a catalytic residue. Y282 is modified (3'-nitrotyrosine). Phosphotyrosine is present on Y432. The residue at position 439 (S439) is a Phosphoserine. Position 449 is a 3'-nitrotyrosine (Y449).

The protein belongs to the tubulin family. Dimer of alpha and beta chains. A typical microtubule is a hollow water-filled tube with an outer diameter of 25 nm and an inner diameter of 15 nM. Alpha-beta heterodimers associate head-to-tail to form protofilaments running lengthwise along the microtubule wall with the beta-tubulin subunit facing the microtubule plus end conferring a structural polarity. Microtubules usually have 13 protofilaments but different protofilament numbers can be found in some organisms and specialized cells. The cofactor is Mg(2+). Some glutamate residues at the C-terminus are polyglycylated, resulting in polyglycine chains on the gamma-carboxyl group. Glycylation is mainly limited to tubulin incorporated into axonemes (cilia and flagella) whereas glutamylation is prevalent in neuronal cells, centrioles, axonemes, and the mitotic spindle. Both modifications can coexist on the same protein on adjacent residues, and lowering polyglycylation levels increases polyglutamylation, and reciprocally. Cilia and flagella glycylation is required for their stability and maintenance. Flagella glycylation controls sperm motility. In terms of processing, some glutamate residues at the C-terminus are polyglutamylated, resulting in polyglutamate chains on the gamma-carboxyl group. Polyglutamylation plays a key role in microtubule severing by spastin (SPAST). SPAST preferentially recognizes and acts on microtubules decorated with short polyglutamate tails: severing activity by SPAST increases as the number of glutamates per tubulin rises from one to eight, but decreases beyond this glutamylation threshold. Glutamylation is also involved in cilia motility. Post-translationally, acetylation of alpha chains at Lys-40 is located inside the microtubule lumen. This modification has been correlated with increased microtubule stability, intracellular transport and ciliary assembly. Methylation of alpha chains at Lys-40 is found in mitotic microtubules and is required for normal mitosis and cytokinesis contributing to genomic stability. In terms of processing, nitration of Tyr-449 is irreversible and interferes with normal dynein intracellular distribution. Post-translationally, undergoes a tyrosination/detyrosination cycle, the cyclic removal and re-addition of a C-terminal tyrosine residue by the enzymes tubulin tyrosine carboxypeptidase (MATCAP1, VASH1 or VASH2) and tubulin tyrosine ligase (TTL), respectively. Tyrosination promotes microtubule interaction with CAP-Gly domain-containing proteins such as CLIP1, CLIP2 and DCTN1. Tyrosination regulates the initiation of dynein-dynactin motility via interaction with DCTN1, which brings the dynein-dynactin complex into contact with microtubules. In neurons, tyrosinated tubulins mediate the initiation of retrograde vesicle transport. In terms of processing, detyrosination is involved in metaphase plate congression by guiding chromosomes during mitosis: detyrosination promotes interaction with CENPE, promoting pole-proximal transport of chromosomes toward the equator. Detyrosination increases microtubules-dependent mechanotransduction in dystrophic cardiac and skeletal muscle. In cardiomyocytes, detyrosinated microtubules are required to resist to contractile compression during contraction: detyrosination promotes association with desmin (DES) at force-generating sarcomeres, leading to buckled microtubules and mechanical resistance to contraction.

Its subcellular location is the cytoplasm. The protein resides in the cytoskeleton. The catalysed reaction is GTP + H2O = GDP + phosphate + H(+). In terms of biological role, tubulin is the major constituent of microtubules, a cylinder consisting of laterally associated linear protofilaments composed of alpha- and beta-tubulin heterodimers. Microtubules grow by the addition of GTP-tubulin dimers to the microtubule end, where a stabilizing cap forms. Below the cap, tubulin dimers are in GDP-bound state, owing to GTPase activity of alpha-tubulin. The sequence is that of Tubulin alpha-1C chain (Tuba1c) from Rattus norvegicus (Rat).